Consider the following 209-residue polypeptide: Uridine kinase (209 aa).

12–19 is an ATP binding site; it reads GGTGSGKS.

It belongs to the uridine kinase family.

Its subcellular location is the cytoplasm. The enzyme catalyses uridine + ATP = UMP + ADP + H(+). It catalyses the reaction cytidine + ATP = CMP + ADP + H(+). It functions in the pathway pyrimidine metabolism; CTP biosynthesis via salvage pathway; CTP from cytidine: step 1/3. The protein operates within pyrimidine metabolism; UMP biosynthesis via salvage pathway; UMP from uridine: step 1/1. This is Uridine kinase from Clostridium tetani (strain Massachusetts / E88).